Here is a 382-residue protein sequence, read N- to C-terminus: Porin-like protein BU359 (382 aa).

A signal peptide spans 1-23 (MTNRKSLAMVIPMLLAASNGVNA).

It belongs to the Gram-negative porin family. In terms of assembly, homotrimer.

The protein resides in the cell outer membrane. Its function is as follows. Forms pores that allow passive diffusion of small molecules across the membrane. This Buchnera aphidicola subsp. Acyrthosiphon pisum (strain APS) (Acyrthosiphon pisum symbiotic bacterium) protein is Porin-like protein BU359.